The following is a 479-amino-acid chain: Aspartyl/glutamyl-tRNA(Asn/Gln) amidotransferase subunit B (479 aa).

It belongs to the GatB/GatE family. GatB subfamily. Heterotrimer of A, B and C subunits.

It catalyses the reaction L-glutamyl-tRNA(Gln) + L-glutamine + ATP + H2O = L-glutaminyl-tRNA(Gln) + L-glutamate + ADP + phosphate + H(+). The catalysed reaction is L-aspartyl-tRNA(Asn) + L-glutamine + ATP + H2O = L-asparaginyl-tRNA(Asn) + L-glutamate + ADP + phosphate + 2 H(+). Functionally, allows the formation of correctly charged Asn-tRNA(Asn) or Gln-tRNA(Gln) through the transamidation of misacylated Asp-tRNA(Asn) or Glu-tRNA(Gln) in organisms which lack either or both of asparaginyl-tRNA or glutaminyl-tRNA synthetases. The reaction takes place in the presence of glutamine and ATP through an activated phospho-Asp-tRNA(Asn) or phospho-Glu-tRNA(Gln). In Streptococcus pyogenes serotype M6 (strain ATCC BAA-946 / MGAS10394), this protein is Aspartyl/glutamyl-tRNA(Asn/Gln) amidotransferase subunit B.